We begin with the raw amino-acid sequence, 464 residues long: MGKRLLDKLWERHVVTTNENGLDLLYIDLHLVHEVTSPQAFEGLRLTNRTVRRPDLTFATMDHNIPTKDVWNITDRIAKQQLDTLRENCKQFQVPLADIGDEEQGIVHVIGPELGLTQPGKTIVCGDSHTATHGAFGALAFGIGTSEVEHVLATQTLWQRKPKAMGIELKGKLQKGVYAKDIILHLLSKYGVAVGTGYVMEFYGETIGTMEMEERMTLCNMAIEGGAKAGIIAPDEKTFAYVKGRKYAPRDYETFEKKWFELYTDADAIYDLHISIDVTDLAPYVTWGTNPSMGVRIDEKLPEKHDVNDERAFSYMGLIPGQSTYDIPVQHVFIGSCTNSRLSDLEIAASVVKGRKVKEGVRALVVPGSKRVRDAAMQKGLHHIFEEAGFEWREPGCSMCLGMNPDQVPEGEHCASTSNRNFEGRQGKGARTHLVSPAMAAAAALYGHFVDIRKESYDGAISYS.

Cysteine 337, cysteine 397, and cysteine 400 together coordinate [4Fe-4S] cluster.

Belongs to the aconitase/IPM isomerase family. LeuC type 1 subfamily. Heterodimer of LeuC and LeuD. The cofactor is [4Fe-4S] cluster.

It catalyses the reaction (2R,3S)-3-isopropylmalate = (2S)-2-isopropylmalate. It participates in amino-acid biosynthesis; L-leucine biosynthesis; L-leucine from 3-methyl-2-oxobutanoate: step 2/4. In terms of biological role, catalyzes the isomerization between 2-isopropylmalate and 3-isopropylmalate, via the formation of 2-isopropylmaleate. The polypeptide is 3-isopropylmalate dehydratase large subunit (Bacillus anthracis (strain A0248)).